The following is a 102-amino-acid chain: NADH-quinone oxidoreductase subunit K (102 aa).

The next 3 helical transmembrane spans lie at 5–25 (LSHYLTVSAILFTIGVFGIFL), 31–51 (IVILMSIELILLAVNINMVAF), and 65–85 (LFILTVAAAEAAIGLAILVVF).

Belongs to the complex I subunit 4L family. NDH-1 is composed of 14 different subunits. Subunits NuoA, H, J, K, L, M, N constitute the membrane sector of the complex.

It localises to the cell inner membrane. The enzyme catalyses a quinone + NADH + 5 H(+)(in) = a quinol + NAD(+) + 4 H(+)(out). Functionally, NDH-1 shuttles electrons from NADH, via FMN and iron-sulfur (Fe-S) centers, to quinones in the respiratory chain. The immediate electron acceptor for the enzyme in this species is believed to be ubiquinone. Couples the redox reaction to proton translocation (for every two electrons transferred, four hydrogen ions are translocated across the cytoplasmic membrane), and thus conserves the redox energy in a proton gradient. This chain is NADH-quinone oxidoreductase subunit K, found in Agrobacterium fabrum (strain C58 / ATCC 33970) (Agrobacterium tumefaciens (strain C58)).